The sequence spans 348 residues: Glycerol-1-phosphate dehydrogenase [NAD(P)+] (348 aa).

NAD(+) is bound by residues 94–98 (GKVID) and T116. D121 serves as a coordination point for substrate. S125 is a binding site for NAD(+). D168 serves as a coordination point for substrate. Zn(2+) is bound by residues D168 and H248. H252 lines the substrate pocket. H264 provides a ligand contact to Zn(2+).

It belongs to the glycerol-1-phosphate dehydrogenase family. In terms of assembly, homooctamer. It depends on Zn(2+) as a cofactor.

Its subcellular location is the cytoplasm. The enzyme catalyses sn-glycerol 1-phosphate + NAD(+) = dihydroxyacetone phosphate + NADH + H(+). The catalysed reaction is sn-glycerol 1-phosphate + NADP(+) = dihydroxyacetone phosphate + NADPH + H(+). It participates in membrane lipid metabolism; glycerophospholipid metabolism. Functionally, catalyzes the NAD(P)H-dependent reduction of dihydroxyacetonephosphate (DHAP or glycerone phosphate) to glycerol 1-phosphate (G1P). The G1P thus generated is used as the glycerophosphate backbone of phospholipids in the cellular membranes of Archaea. The sequence is that of Glycerol-1-phosphate dehydrogenase [NAD(P)+] from Methanosphaera stadtmanae (strain ATCC 43021 / DSM 3091 / JCM 11832 / MCB-3).